The following is a 375-amino-acid chain: 23S rRNA (uracil(747)-C(5))-methyltransferase RlmC (375 aa).

C3, C11, C14, and C87 together coordinate [4Fe-4S] cluster. Q212, F241, E262, and N307 together coordinate S-adenosyl-L-methionine. The Nucleophile role is filled by C334.

It belongs to the class I-like SAM-binding methyltransferase superfamily. RNA M5U methyltransferase family. RlmC subfamily.

The catalysed reaction is uridine(747) in 23S rRNA + S-adenosyl-L-methionine = 5-methyluridine(747) in 23S rRNA + S-adenosyl-L-homocysteine + H(+). Catalyzes the formation of 5-methyl-uridine at position 747 (m5U747) in 23S rRNA. In Escherichia coli O45:K1 (strain S88 / ExPEC), this protein is 23S rRNA (uracil(747)-C(5))-methyltransferase RlmC.